Consider the following 579-residue polypeptide: Glutamine--tRNA ligase (579 aa).

Residues 41–51 carry the 'HIGH' region motif; it reads PEPNGYLHIGH. ATP-binding positions include 42 to 44 and 48 to 54; these read EPN and HIGHAKA. Residues Asp-74 and Tyr-218 each contribute to the L-glutamine site. Residues Thr-237, 285–286, and 293–295 contribute to the ATP site; these read RL and MSK. A 'KMSKS' region motif is present at residues 292–296; the sequence is VMSKR.

This sequence belongs to the class-I aminoacyl-tRNA synthetase family. In terms of assembly, monomer.

The protein localises to the cytoplasm. It catalyses the reaction tRNA(Gln) + L-glutamine + ATP = L-glutaminyl-tRNA(Gln) + AMP + diphosphate. The sequence is that of Glutamine--tRNA ligase from Xanthomonas campestris pv. campestris (strain 8004).